A 504-amino-acid chain; its full sequence is Anaerobic nitric oxide reductase transcription regulator NorR (504 aa).

Residue aspartate 57 is modified to 4-aspartylphosphate. Residues 187-416 (MIGLSPGMTQ…LEHAIHRAVV (230 aa)) enclose the Sigma-54 factor interaction domain. ATP contacts are provided by residues 215–222 (GETGTGKE) and 278–287 (ADNGTLFLDE). The H-T-H motif DNA-binding region spans 479-498 (WAACARMLETDVANLHRLAK).

The protein operates within nitrogen metabolism; nitric oxide reduction. Its function is as follows. Required for the expression of anaerobic nitric oxide (NO) reductase, acts as a transcriptional activator for at least the norVW operon. Activation also requires sigma-54. The polypeptide is Anaerobic nitric oxide reductase transcription regulator NorR (Escherichia coli O17:K52:H18 (strain UMN026 / ExPEC)).